The primary structure comprises 476 residues: Cysteine--tRNA ligase (476 aa).

Cysteine 36 is a binding site for Zn(2+). Residues 38-48 (PTVYDYAHIGN) carry the 'HIGH' region motif. Positions 221, 246, and 250 each coordinate Zn(2+). A 'KMSKS' region motif is present at residues 278–282 (KMSKS). Lysine 281 contributes to the ATP binding site.

This sequence belongs to the class-I aminoacyl-tRNA synthetase family. As to quaternary structure, monomer. Zn(2+) is required as a cofactor.

The protein resides in the cytoplasm. The enzyme catalyses tRNA(Cys) + L-cysteine + ATP = L-cysteinyl-tRNA(Cys) + AMP + diphosphate. The protein is Cysteine--tRNA ligase of Chlamydia felis (strain Fe/C-56) (Chlamydophila felis).